A 206-amino-acid polypeptide reads, in one-letter code: Peptidyl-tRNA hydrolase (206 aa).

Tyr-14 is a binding site for tRNA. The Proton acceptor role is filled by His-19. Positions 64, 66, and 112 each coordinate tRNA.

Belongs to the PTH family. Monomer.

The protein localises to the cytoplasm. It carries out the reaction an N-acyl-L-alpha-aminoacyl-tRNA + H2O = an N-acyl-L-amino acid + a tRNA + H(+). In terms of biological role, hydrolyzes ribosome-free peptidyl-tRNAs (with 1 or more amino acids incorporated), which drop off the ribosome during protein synthesis, or as a result of ribosome stalling. Catalyzes the release of premature peptidyl moieties from peptidyl-tRNA molecules trapped in stalled 50S ribosomal subunits, and thus maintains levels of free tRNAs and 50S ribosomes. This is Peptidyl-tRNA hydrolase from Rhodopseudomonas palustris (strain ATCC BAA-98 / CGA009).